We begin with the raw amino-acid sequence, 119 residues long: Large ribosomal subunit protein uL22 (119 aa).

Belongs to the universal ribosomal protein uL22 family. In terms of assembly, part of the 50S ribosomal subunit.

In terms of biological role, this protein binds specifically to 23S rRNA; its binding is stimulated by other ribosomal proteins, e.g. L4, L17, and L20. It is important during the early stages of 50S assembly. It makes multiple contacts with different domains of the 23S rRNA in the assembled 50S subunit and ribosome. Its function is as follows. The globular domain of the protein is located near the polypeptide exit tunnel on the outside of the subunit, while an extended beta-hairpin is found that lines the wall of the exit tunnel in the center of the 70S ribosome. The protein is Large ribosomal subunit protein uL22 of Rickettsia akari (strain Hartford).